The sequence spans 387 residues: MESPSLPMTAKDWTTTSLHRVFAMQGGEDDLSYVNNSDSQALAITLSKPILISSLQSIKLFSDQTPIKITDLGCATGSNTFTTVDTVVETLQRRYTARCGGGGSPEFEAFFCDLPSNDFNMLFKLLAEKQKVDSPAKYFAGGVAGSFYDRLFPRGTIHVAVSLSALHWLSQIPEKVLEKESRTWNKGKTWIEGAKKEVVEAYAEQSDKDLDDFMSCRKEEMVKGGVLFVLMAGRPSGSSSQFGDQDTRAKHPFTTTMEQAWQDLIEEGLIDEETRDGFNIPAYMRSPEEVTAGIDRCGGFKIGKMDFLKIVEYSDEKQEEWKKDPVSYGRARTNLVQAAIRPMVDAYLGPDLSHELFKRYENRVSTNQEFLHITCFYGVVVFSAIRV.

Tyr33 contributes to the S-adenosyl-L-homocysteine binding site. Position 40 (Gln40) interacts with gibberellin A4. Residues Cys74, Asn79, Asp113, Leu114, Ser146, and Phe147 each coordinate S-adenosyl-L-homocysteine. Positions 167 and 168 each coordinate gibberellin A4. The Mg(2+) site is built by Asn185, Arg275, Asp276, Phe278, and Asn279.

This sequence belongs to the methyltransferase superfamily. Type-7 methyltransferase family. SABATH subfamily. Mg(2+) is required as a cofactor. In terms of tissue distribution, expressed in siliques and germinating seeds. Not detected in leaves, stems, flowers and roots.

The catalysed reaction is gibberellin A4 + S-adenosyl-L-methionine = O-methyl gibberellin A4 + S-adenosyl-L-homocysteine. Down-regulated by Zn(2+), Cu(2+) and Fe(3+). No effect of K(+), NH(4+), Na(+), Ca(2+), Mg(2+), Mn(2+) and Fe(2+). Methylates the carboxyl group of several gibberellins (GAs). Substrate preference is GA4 &gt; GA34 &gt; GA9 &gt; GA3 &gt; GA1 &gt; GA51 &gt; GA20. No activity with diterpenes abietic acid and ent-kaurenoic acid. In Arabidopsis thaliana (Mouse-ear cress), this protein is Gibberellic acid methyltransferase 2 (GAMT2).